A 227-amino-acid chain; its full sequence is Cytidylate kinase (227 aa).

12 to 20 contributes to the ATP binding site; the sequence is GPSGAGKGT.

This sequence belongs to the cytidylate kinase family. Type 1 subfamily.

It is found in the cytoplasm. The enzyme catalyses CMP + ATP = CDP + ADP. The catalysed reaction is dCMP + ATP = dCDP + ADP. The protein is Cytidylate kinase of Xanthomonas axonopodis pv. citri (strain 306).